The primary structure comprises 630 residues: Lysophospholipase 3 (630 aa).

Positions methionine 1 to alanine 16 are cleaved as a signal peptide. The 549-residue stretch at serine 39–aspartate 587 folds into the PLA2c domain. 15 N-linked (GlcNAc...) asparagine glycosylation sites follow: asparagine 56, asparagine 95, asparagine 164, asparagine 220, asparagine 283, asparagine 351, asparagine 390, asparagine 443, asparagine 456, asparagine 462, asparagine 493, asparagine 514, asparagine 542, asparagine 566, and asparagine 583. The GPI-like-anchor amidated asparagine moiety is linked to residue asparagine 606. Positions alanine 607 to alanine 630 are cleaved as a propeptide — removed in mature form.

It belongs to the lysophospholipase family. In terms of processing, the GPI-like anchor contains a phosphoceramide lipid group.

It is found in the cell membrane. The enzyme catalyses a 1-acyl-sn-glycero-3-phosphocholine + H2O = sn-glycerol 3-phosphocholine + a fatty acid + H(+). In terms of biological role, catalyzes the release of fatty acids from lysophospholipids. This Aspergillus fumigatus (strain CBS 144.89 / FGSC A1163 / CEA10) (Neosartorya fumigata) protein is Lysophospholipase 3 (plb3).